The following is a 699-amino-acid chain: Polyribonucleotide nucleotidyltransferase (699 aa).

Asp485 and Asp491 together coordinate Mg(2+). One can recognise a KH domain in the interval 552–611 (PRITVIKINPEKIRDVIGKGGAVIRALTEETGTTIELEDDGTVKIASSNGEATKEAIRRI). Residues 621–689 (GRIYNGKVIR…RQGRVRLSIK (69 aa)) form the S1 motif domain.

Belongs to the polyribonucleotide nucleotidyltransferase family. Component of the RNA degradosome, which is a multiprotein complex involved in RNA processing and mRNA degradation. Mg(2+) serves as cofactor.

It is found in the cytoplasm. It carries out the reaction RNA(n+1) + phosphate = RNA(n) + a ribonucleoside 5'-diphosphate. Involved in mRNA degradation. Catalyzes the phosphorolysis of single-stranded polyribonucleotides processively in the 3'- to 5'-direction. The chain is Polyribonucleotide nucleotidyltransferase from Shewanella baltica (strain OS223).